The primary structure comprises 568 residues: MVESDKSSVEELKKRVRKRSRGKKNEQQKAEEKTHTVEENADETQKKSEKKVKKVRGKIEEEEEKVEAMEDGEDEKNIVIVGKGIMTNVTFDSLDLSEQTSIAIKEMGFQYMTQIQAGSIQPLLEGKDVLGAARTGSGKTLAFLIPAVELLFKERFSPRNGTGVIVICPTRELAIQTKNVAEELLKHHSQTVSMVIGGNNRRSEAQRIASGSNLVIATPGRLLDHLQNTKAFIYKHLKCLVIDEADRILEENFEEDMNKILKILPKTRQTALFSATQTSKVKDLARVSLTSPVHVDVDDGRRKVTNEGLEQGYCVVPSKQRLILLISFLKKNLNKKIMVFFSTCKSVQFHTEIMKISDVDVSDIHGGMDQNRRTKTFFDFMKAKKGILLCTDVAARGLDIPSVDWIIQYDPPDKPTEYIHRVGRTARGEGAKGKALLVLIPEELQFIRYLKAAKVPVKELEFNEKRLSNVQSALEKCVAKDYNLNKLAKDAYRAYLSAYNSHSLKDIFNVHRLDLLAVAESFCFSSPPKVNLNIESGAGKVRKARKQQGRNGFSPYSPYGKSTPTKEA.

Composition is skewed to basic and acidic residues over residues 1-13 and 23-47; these read MVES…EELK and KKNE…TQKK. The tract at residues 1 to 70 is disordered; the sequence is MVESDKSSVE…EEEEKVEAME (70 aa). A coiled-coil region spans residues 13-78; the sequence is KKRVRKRSRG…MEDGEDEKNI (66 aa). The span at 60 to 70 shows a compositional bias: acidic residues; that stretch reads EEEEEKVEAME. The Q motif signature appears at 89–117; sequence VTFDSLDLSEQTSIAIKEMGFQYMTQIQA. Residues 120–295 enclose the Helicase ATP-binding domain; sequence IQPLLEGKDV…RVSLTSPVHV (176 aa). 133–140 serves as a coordination point for ATP; sequence ARTGSGKT. The DEAD box signature appears at 243 to 246; that stretch reads DEAD. The 148-residue stretch at 321 to 468 folds into the Helicase C-terminal domain; it reads RLILLISFLK…ELEFNEKRLS (148 aa). The tract at residues 540 to 568 is disordered; the sequence is KVRKARKQQGRNGFSPYSPYGKSTPTKEA.

The protein belongs to the DEAD box helicase family. DDX18/HAS1 subfamily.

The enzyme catalyses ATP + H2O = ADP + phosphate + H(+). The chain is DEAD-box ATP-dependent RNA helicase 51 (RH51) from Arabidopsis thaliana (Mouse-ear cress).